The primary structure comprises 802 residues: Oligophrenin-1 (802 aa).

A PH domain is found at 265 to 368 (QPTIEGYLYT…WMEAMDGKEP (104 aa)). In terms of domain architecture, Rho-GAP spans 380 to 564 (MELNEVGFKF…ILIEHFGKIY (185 aa)). Disordered regions lie at residues 641-663 (QKSG…CQTE) and 682-802 (TKAI…GDES). Residues 716–732 (HHKEGDTDCFSKVRPPG) are compositionally biased toward basic and acidic residues. Positions 751–768 (SSTSQKPESKPETVSSNA) are enriched in polar residues.

In terms of assembly, interacts with HOMER1. Interacts with AMPA receptor complexes. Interacts with SH3GL2 (endophilin-A1). Interacts (via C-terminus) with NR1D1. High expression in brain, particularly in the cerebellum, hippocampus, thalamus, frontal lobes, sensory cortex. Found in the myelin sheaths of peripheral nerves, chromaffin cells within the adrenal medulla, and in extra-adrenal chromaffin cells associated with celiac ganglia.

The protein resides in the postsynapse. Its subcellular location is the presynapse. The protein localises to the cell projection. It is found in the axon. It localises to the dendritic spine. The protein resides in the dendrite. Its subcellular location is the cytoplasm. Stimulates GTP hydrolysis of members of the Rho family. Its action on RHOA activity and signaling is implicated in growth and stabilization of dendritic spines, and therefore in synaptic function, in hippocampal neurons. Critical for the stabilization of AMPA receptors at postsynaptic sites. Critical for the regulation of synaptic vesicle endocytosis at pre-synaptic terminals. Required for the localization of NR1D1 to dendrites, can suppress its repressor activity and protect it from proteasomal degradation. This chain is Oligophrenin-1 (Ophn1), found in Rattus norvegicus (Rat).